Reading from the N-terminus, the 155-residue chain is Small ribosomal subunit protein uS7cz/uS7cy (155 aa).

This sequence belongs to the universal ribosomal protein uS7 family. Part of the 30S ribosomal subunit.

It is found in the plastid. The protein resides in the chloroplast. In terms of biological role, one of the primary rRNA binding proteins, it binds directly to 16S rRNA where it nucleates assembly of the head domain of the 30S subunit. In Oenothera argillicola (Appalachian evening primrose), this protein is Small ribosomal subunit protein uS7cz/uS7cy (rps7-A).